The sequence spans 640 residues: Serine/threonine-protein phosphatase with EF-hands 1 (640 aa).

An IQ domain is found at 16–45; that stretch reads VVRAALIIQNWYRRYRARLSARQHYALAIF. A catalytic region spans residues 122 to 445; the sequence is INLLLQAFKQ…PQFFQYQVTS (324 aa). Mn(2+) contacts are provided by D173, H175, D202, and N234. The active-site Proton donor is H235. Residues H286 and H393 each coordinate Mn(2+). EF-hand domains are found at residues 473-508, 556-591, and 596-631; these read ARKT…ILGL, RYRS…FNAH, and IDDS…VHKY. D569, D571, S573, E580, D609, N611, D613, N615, and E620 together coordinate Ca(2+).

It belongs to the PPP phosphatase family. Mn(2+) serves as cofactor. The cofactor is Mg(2+).

The catalysed reaction is O-phospho-L-seryl-[protein] + H2O = L-seryl-[protein] + phosphate. The enzyme catalyses O-phospho-L-threonyl-[protein] + H2O = L-threonyl-[protein] + phosphate. With respect to regulation, activated by calcium. May have a role in the recovery or adaptation response of photoreceptors. May have a role in development. This Rattus norvegicus (Rat) protein is Serine/threonine-protein phosphatase with EF-hands 1 (Ppef1).